The primary structure comprises 468 residues: Aldehyde dehydrogenase family 3 member B1 (468 aa).

Methionine 1 is modified (N-acetylmethionine). 188-193 (GNTYVG) is a binding site for NAD(+). Catalysis depends on residues glutamate 210 and cysteine 244. 2 S-palmitoyl cysteine lipidation sites follow: cysteine 462 and cysteine 463. Cysteine methyl ester is present on cysteine 465. The S-geranylgeranyl cysteine moiety is linked to residue cysteine 465. Positions 466 to 468 (TLL) are cleaved as a propeptide — removed in mature form.

This sequence belongs to the aldehyde dehydrogenase family. Post-translationally, dually lipidated in the C-terminus; prenylation occurs prior to, and is a prerequisite for palmitoylation. It is also required for activity towards long-chain substrates.

It is found in the cell membrane. It carries out the reaction an aldehyde + NAD(+) + H2O = a carboxylate + NADH + 2 H(+). The enzyme catalyses a long-chain fatty aldehyde + NAD(+) + H2O = a long-chain fatty acid + NADH + 2 H(+). It catalyses the reaction a medium-chain fatty aldehyde + NAD(+) + H2O = a medium-chain fatty acid + NADH + 2 H(+). The catalysed reaction is octanal + NAD(+) + H2O = octanoate + NADH + 2 H(+). It carries out the reaction nonanal + NAD(+) + H2O = nonanoate + NADH + 2 H(+). The enzyme catalyses hexadecanoate + NADH + 2 H(+) = hexadecanal + NAD(+) + H2O. It catalyses the reaction (2E)-octenal + NAD(+) + H2O = (2E)-octenoate + NADH + 2 H(+). The catalysed reaction is (E)-non-2-enal + NAD(+) + H2O = (E)-non-2-enoate + NADH + 2 H(+). It carries out the reaction (E)-4-hydroxynon-2-enal + NAD(+) + H2O = (E)-4-hydroxynon-2-enoate + NADH + 2 H(+). The enzyme catalyses (2E)-hexadecenal + NAD(+) + H2O = (E)-hexadec-2-enoate + NADH + 2 H(+). It catalyses the reaction benzaldehyde + NAD(+) + H2O = benzoate + NADH + 2 H(+). The catalysed reaction is an aldehyde + NADP(+) + H2O = a carboxylate + NADPH + 2 H(+). It carries out the reaction a medium-chain fatty aldehyde + NADP(+) + H2O = a medium-chain fatty acid + NADPH + 2 H(+). The enzyme catalyses hexanal + NADP(+) + H2O = hexanoate + NADPH + 2 H(+). It catalyses the reaction octanal + NADP(+) + H2O = octanoate + NADPH + 2 H(+). The catalysed reaction is nonanal + NADP(+) + H2O = nonanoate + NADPH + 2 H(+). It carries out the reaction (2E)-octenal + NADP(+) + H2O = (2E)-octenoate + NADPH + 2 H(+). The enzyme catalyses (E)-non-2-enal + NADP(+) + H2O = (E)-non-2-enoate + NADPH + 2 H(+). It catalyses the reaction (E)-4-hydroxynon-2-enal + NADP(+) + H2O = (E)-4-hydroxynon-2-enoate + NADPH + 2 H(+). The catalysed reaction is benzaldehyde + NADP(+) + H2O = benzoate + NADPH + 2 H(+). It functions in the pathway alcohol metabolism; ethanol degradation; acetate from ethanol: step 2/2. Its function is as follows. Oxidizes medium and long chain saturated and unsaturated fatty aldehydes generated in the plasma membrane into non-toxic fatty acids. May have a protective role against the cytotoxicity induced by lipid peroxidation. Short-chain fatty aldehydes are not good substrates. Can use both NADP(+) and NAD(+) as electron acceptor in vitro, however in vivo preference will depend on their tissue levels. Low activity towards acetaldehyde and 3,4-dihydroxyphenylacetaldehyde. Able to metabolize aromatic aldehydes such as benzaldehyde to their acid form. In Rattus norvegicus (Rat), this protein is Aldehyde dehydrogenase family 3 member B1 (Aldh3b1).